Reading from the N-terminus, the 537-residue chain is CTP synthase (537 aa).

The interval Met-1 to Leu-265 is amidoligase domain. Residue Ser-13 coordinates CTP. A UTP-binding site is contributed by Ser-13. Gly-14–Ile-19 is an ATP binding site. Tyr-54 provides a ligand contact to L-glutamine. ATP is bound at residue Asp-71. The Mg(2+) site is built by Asp-71 and Glu-139. CTP-binding positions include Asp-146–Glu-148, Lys-186–Gln-191, and Lys-222. Residues Lys-186 to Gln-191 and Lys-222 contribute to the UTP site. The Glutamine amidotransferase type-1 domain maps to Glu-290–Glu-532. Position 351 (Gly-351) interacts with L-glutamine. Cys-378 functions as the Nucleophile; for glutamine hydrolysis in the catalytic mechanism. Residues Phe-379–Gln-382, Glu-402, and Arg-459 contribute to the L-glutamine site. Catalysis depends on residues His-505 and Glu-507.

It belongs to the CTP synthase family. In terms of assembly, homotetramer.

The catalysed reaction is UTP + L-glutamine + ATP + H2O = CTP + L-glutamate + ADP + phosphate + 2 H(+). It catalyses the reaction L-glutamine + H2O = L-glutamate + NH4(+). The enzyme catalyses UTP + NH4(+) + ATP = CTP + ADP + phosphate + 2 H(+). Its pathway is pyrimidine metabolism; CTP biosynthesis via de novo pathway; CTP from UDP: step 2/2. With respect to regulation, allosterically activated by GTP, when glutamine is the substrate; GTP has no effect on the reaction when ammonia is the substrate. The allosteric effector GTP functions by stabilizing the protein conformation that binds the tetrahedral intermediate(s) formed during glutamine hydrolysis. Inhibited by the product CTP, via allosteric rather than competitive inhibition. Catalyzes the ATP-dependent amination of UTP to CTP with either L-glutamine or ammonia as the source of nitrogen. Regulates intracellular CTP levels through interactions with the four ribonucleotide triphosphates. In Pyrococcus furiosus (strain ATCC 43587 / DSM 3638 / JCM 8422 / Vc1), this protein is CTP synthase.